The following is a 146-amino-acid chain: Transcriptional regulator MraZ (146 aa).

2 consecutive SpoVT-AbrB domains span residues 4–46 (SYEK…SKKS) and 75–118 (TIEV…SKEK).

The protein belongs to the MraZ family. As to quaternary structure, forms oligomers.

The protein resides in the cytoplasm. Its subcellular location is the nucleoid. The polypeptide is Transcriptional regulator MraZ (Mycoplasma mobile (strain ATCC 43663 / 163K / NCTC 11711) (Mesomycoplasma mobile)).